We begin with the raw amino-acid sequence, 134 residues long: ATP synthase epsilon chain (134 aa).

Positions 94-104 (AKLAKSRAESH) are enriched in basic and acidic residues. The disordered stretch occupies residues 94–115 (AKLAKSRAESHLEDDDDNTDIN).

It belongs to the ATPase epsilon chain family. F-type ATPases have 2 components, CF(1) - the catalytic core - and CF(0) - the membrane proton channel. CF(1) has five subunits: alpha(3), beta(3), gamma(1), delta(1), epsilon(1). CF(0) has three main subunits: a, b and c.

It is found in the cell membrane. Produces ATP from ADP in the presence of a proton gradient across the membrane. In Staphylococcus epidermidis (strain ATCC 12228 / FDA PCI 1200), this protein is ATP synthase epsilon chain.